The chain runs to 107 residues: uncharacterized protein (107 aa).

The disordered stretch occupies residues 88-107; that stretch reads GSTPWGSGRQVNAARPIGGR.

It is found in the virion. This is an uncharacterized protein from Acanthamoeba polyphaga (Amoeba).